The primary structure comprises 137 residues: Holo-[acyl-carrier-protein] synthase (137 aa).

Asp-8 and Glu-61 together coordinate Mg(2+).

Belongs to the P-Pant transferase superfamily. AcpS family. The cofactor is Mg(2+).

Its subcellular location is the cytoplasm. It catalyses the reaction apo-[ACP] + CoA = holo-[ACP] + adenosine 3',5'-bisphosphate + H(+). Transfers the 4'-phosphopantetheine moiety from coenzyme A to a Ser of acyl-carrier-protein. The sequence is that of Holo-[acyl-carrier-protein] synthase from Afipia carboxidovorans (strain ATCC 49405 / DSM 1227 / KCTC 32145 / OM5) (Oligotropha carboxidovorans).